The chain runs to 598 residues: Elongation factor 4 (598 aa).

Residues 2–184 (NNIRNFAIIA…AIVAKLPAPQ (183 aa)) form the tr-type G domain. Residues 14–19 (DHGKST) and 131–134 (NKVD) contribute to the GTP site.

It belongs to the TRAFAC class translation factor GTPase superfamily. Classic translation factor GTPase family. LepA subfamily.

It is found in the cell membrane. The enzyme catalyses GTP + H2O = GDP + phosphate + H(+). Required for accurate and efficient protein synthesis under certain stress conditions. May act as a fidelity factor of the translation reaction, by catalyzing a one-codon backward translocation of tRNAs on improperly translocated ribosomes. Back-translocation proceeds from a post-translocation (POST) complex to a pre-translocation (PRE) complex, thus giving elongation factor G a second chance to translocate the tRNAs correctly. Binds to ribosomes in a GTP-dependent manner. The polypeptide is Elongation factor 4 (Wolbachia sp. subsp. Drosophila simulans (strain wRi)).